The chain runs to 207 residues: Putative 3-methyladenine DNA glycosylase (207 aa).

Positions 182–193 (PAPAGARAARAP) are enriched in low complexity. Residues 182–207 (PAPAGARAARAPAPAPRPRRPRGSGP) form a disordered region. Basic residues predominate over residues 198–207 (RPRRPRGSGP).

The protein belongs to the DNA glycosylase MPG family.

The protein is Putative 3-methyladenine DNA glycosylase of Anaeromyxobacter dehalogenans (strain 2CP-C).